Consider the following 628-residue polypeptide: DNA-directed RNA polymerase III subunit RPC3 (628 aa).

Positions 360–383 (EVDGEASADEDEGEDESSEESDYD) are enriched in acidic residues. The disordered stretch occupies residues 360-422 (EVDGEASADE…SAAPKERRMD (63 aa)). The span at 390–406 (TTHGTNGVNGTNGTNGT) shows a compositional bias: low complexity. Over residues 408–422 (VKFDESAAPKERRMD) the composition is skewed to basic and acidic residues. The tract at residues 555-576 (GYVTMVHCLQVLEALRRKERDV) is leucine-zipper.

This sequence belongs to the RNA polymerase beta chain family. In terms of assembly, component of the RNA polymerase III (Pol III) complex consisting of 17 subunits.

The protein resides in the nucleus. DNA-dependent RNA polymerase catalyzes the transcription of DNA into RNA using the four ribonucleoside triphosphates as substrates. Specific core component of RNA polymerase III which synthesizes small RNAs, such as 5S rRNA and tRNAs. This Chaetomium globosum (strain ATCC 6205 / CBS 148.51 / DSM 1962 / NBRC 6347 / NRRL 1970) (Soil fungus) protein is DNA-directed RNA polymerase III subunit RPC3 (RPC82).